The following is a 230-amino-acid chain: Cell division ATP-binding protein FtsE (230 aa).

The 226-residue stretch at 4–229 folds into the ABC transporter domain; that stretch reads IEMRDVVKKY…DESKGEYGYD (226 aa). 37-44 lines the ATP pocket; sequence GPSGAGKS.

Belongs to the ABC transporter superfamily. As to quaternary structure, homodimer. Interacts with FtsX; forms a membrane-associated complex. Interacts with pcsB.

Its subcellular location is the cell membrane. It carries out the reaction ATP + H2O = ADP + phosphate + H(+). In terms of biological role, part of the ABC transporter FtsEX involved in cellular division. Has ATPase activity. Essential for cell division and viability. This is Cell division ATP-binding protein FtsE from Streptococcus pneumoniae serotype 2 (strain D39 / NCTC 7466).